A 151-amino-acid chain; its full sequence is UPF0178 protein Ping_0754 (151 aa).

Belongs to the UPF0178 family.

This chain is UPF0178 protein Ping_0754, found in Psychromonas ingrahamii (strain DSM 17664 / CCUG 51855 / 37).